A 370-amino-acid chain; its full sequence is Chaperone protein DnaJ (370 aa).

The region spanning aspartate 5 to glycine 70 is the J domain. The CR-type zinc finger occupies glycine 134–glutamine 212. Zn(2+) is bound by residues cysteine 147, cysteine 150, cysteine 164, cysteine 167, cysteine 186, cysteine 189, cysteine 200, and cysteine 203. 4 CXXCXGXG motif repeats span residues cysteine 147–glycine 154, cysteine 164–glycine 171, cysteine 186–glycine 193, and cysteine 200–glycine 207. Residues aspartate 351 to aspartate 370 are disordered.

The protein belongs to the DnaJ family. As to quaternary structure, homodimer. Requires Zn(2+) as cofactor.

Its subcellular location is the cytoplasm. Participates actively in the response to hyperosmotic and heat shock by preventing the aggregation of stress-denatured proteins and by disaggregating proteins, also in an autonomous, DnaK-independent fashion. Unfolded proteins bind initially to DnaJ; upon interaction with the DnaJ-bound protein, DnaK hydrolyzes its bound ATP, resulting in the formation of a stable complex. GrpE releases ADP from DnaK; ATP binding to DnaK triggers the release of the substrate protein, thus completing the reaction cycle. Several rounds of ATP-dependent interactions between DnaJ, DnaK and GrpE are required for fully efficient folding. Also involved, together with DnaK and GrpE, in the DNA replication of plasmids through activation of initiation proteins. In Acinetobacter baumannii (strain AB0057), this protein is Chaperone protein DnaJ.